A 361-amino-acid polypeptide reads, in one-letter code: Holliday junction branch migration complex subunit RuvB (361 aa).

The segment at 1 to 181 is large ATPase domain (RuvB-L); sequence MKDQRLLDSV…FGIPIRLNFY (181 aa). Residues Leu20, Arg21, Gly62, Lys65, Thr66, Thr67, 128-130, Arg171, Tyr181, and Arg218 each bind ATP; that span reads EDY. Thr66 is a binding site for Mg(2+). The interval 182–252 is small ATPAse domain (RuvB-S); that stretch reads TIEELEYIVQ…VADEALSRLE (71 aa). The interval 255–361 is head domain (RuvB-H); the sequence is HLGLDPLDRR…QTTLWDEADE (107 aa). Positions 291, 310, and 315 each coordinate DNA.

This sequence belongs to the RuvB family. In terms of assembly, homohexamer. Forms an RuvA(8)-RuvB(12)-Holliday junction (HJ) complex. HJ DNA is sandwiched between 2 RuvA tetramers; dsDNA enters through RuvA and exits via RuvB. An RuvB hexamer assembles on each DNA strand where it exits the tetramer. Each RuvB hexamer is contacted by two RuvA subunits (via domain III) on 2 adjacent RuvB subunits; this complex drives branch migration. In the full resolvosome a probable DNA-RuvA(4)-RuvB(12)-RuvC(2) complex forms which resolves the HJ.

The protein resides in the cytoplasm. It carries out the reaction ATP + H2O = ADP + phosphate + H(+). Its function is as follows. The RuvA-RuvB-RuvC complex processes Holliday junction (HJ) DNA during genetic recombination and DNA repair, while the RuvA-RuvB complex plays an important role in the rescue of blocked DNA replication forks via replication fork reversal (RFR). RuvA specifically binds to HJ cruciform DNA, conferring on it an open structure. The RuvB hexamer acts as an ATP-dependent pump, pulling dsDNA into and through the RuvAB complex. RuvB forms 2 homohexamers on either side of HJ DNA bound by 1 or 2 RuvA tetramers; 4 subunits per hexamer contact DNA at a time. Coordinated motions by a converter formed by DNA-disengaged RuvB subunits stimulates ATP hydrolysis and nucleotide exchange. Immobilization of the converter enables RuvB to convert the ATP-contained energy into a lever motion, pulling 2 nucleotides of DNA out of the RuvA tetramer per ATP hydrolyzed, thus driving DNA branch migration. The RuvB motors rotate together with the DNA substrate, which together with the progressing nucleotide cycle form the mechanistic basis for DNA recombination by continuous HJ branch migration. Branch migration allows RuvC to scan DNA until it finds its consensus sequence, where it cleaves and resolves cruciform DNA. In Bartonella quintana (strain Toulouse) (Rochalimaea quintana), this protein is Holliday junction branch migration complex subunit RuvB.